The sequence spans 173 residues: Shikimate kinase 1 (173 aa).

Residue 14-19 (GAGKST) coordinates ATP. Position 18 (serine 18) interacts with Mg(2+). Residues aspartate 36, arginine 60, and glycine 82 each contribute to the substrate site. Arginine 120 contacts ATP. Arginine 140 is a binding site for substrate. Glutamine 157 serves as a coordination point for ATP.

The protein belongs to the shikimate kinase family. As to quaternary structure, monomer. Mg(2+) is required as a cofactor.

The protein localises to the cytoplasm. It catalyses the reaction shikimate + ATP = 3-phosphoshikimate + ADP + H(+). The protein operates within metabolic intermediate biosynthesis; chorismate biosynthesis; chorismate from D-erythrose 4-phosphate and phosphoenolpyruvate: step 5/7. In terms of biological role, catalyzes the specific phosphorylation of the 3-hydroxyl group of shikimic acid using ATP as a cosubstrate. The sequence is that of Shikimate kinase 1 from Escherichia fergusonii (strain ATCC 35469 / DSM 13698 / CCUG 18766 / IAM 14443 / JCM 21226 / LMG 7866 / NBRC 102419 / NCTC 12128 / CDC 0568-73).